The sequence spans 192 residues: Apoptosis regulator BAX (192 aa).

Residue methionine 1 is modified to N-acetylmethionine. The short motif at 59 to 73 is the BH3 element; it reads LSECLKRIGDELDSN. The short motif at 98-118 is the BH1 element; it reads DMFSDGNFNWGRVVALFYFAS. Lysine 128 is covalently cross-linked (Glycyl lysine isopeptide (Lys-Gly) (interchain with G-Cter in ubiquitin)). The short motif at 150 to 165 is the BH2 element; that stretch reads GWIQDQGGWDGLLSYF. Residues 172–192 form a helical membrane-spanning segment; sequence TVTIFVAGVLTASLTIWKKMG. Lysine 190 is covalently cross-linked (Glycyl lysine isopeptide (Lys-Gly) (interchain with G-Cter in ubiquitin)).

The protein belongs to the Bcl-2 family. Homodimer. Forms higher oligomers under stress conditions. Forms heterooligomers with BAK. Interacts with BCL2L11. Interaction with BCL2L11 promotes BAX oligomerization and association with mitochondrial membranes, with subsequent release of cytochrome c. Forms heterodimers with BCL2, BCL2L1 isoform Bcl-X(L), BCL2L2, MCL1 and A1. Interacts with SH3GLB1. Interacts with humanin; forms fibers with humanin which results in BAX conformational changes and sequestering of BAX into the fibers, preventing BAX activation. Interacts with SFN and YWHAZ; the interaction occurs in the cytoplasm. Under stress conditions, JNK-mediated phosphorylation of SFN and YWHAZ, releases BAX to mitochondria. Interacts with RNF144B, which regulates the ubiquitin-dependent stability of BAX. Interacts with CLU under stress conditions that cause a conformation change leading to BAX oligomerization and association with mitochondria. Does not interact with CLU in unstressed cells. Interacts with FAIM2/LFG2. Interacts with RTL10/BOP. Interacts (via a C-terminal 33 residues) with NOL3 (via CARD domain); inhibits BAX activation and translocation and consequently cytochrome c release from mitochondria. Interacts with GIMAP3/IAN4 and GIMAP5/IAN5; this interaction is increased, when cells initiate apoptosis upon IL2 withdrawal. Interacts with IRF3; the interaction is direct, increases upon Sendai virus infection and mediates the formation of the apoptosis complex TOMM70:HSP90AA1:IRF3:BAX. Interacts with MOAP1, facilitating BAX-dependent mitochondrial outer membrane permeabilization and apoptosis. Interacts with BCL2L10/BCL-B. Interacts with non-acetylated XRCC6/Ku70; this interaction leads to BAX sequestration in the cytosol, away from the mitochondria, preventing BAX-mediated apoptosis. As to quaternary structure, interacts with BCL2A1 and BCL2L1 isoform Bcl-X(L). In terms of assembly, (Microbial infection) Interacts with adenovirus E1B 19K protein; this interaction blocks BAX oligomerization. (Microbial infection) Interacts with human cytomegalovirus/HHV-5 protein vMIA/UL37. As to quaternary structure, (Microbial infection) Interacts with enterovirus protein 2B; this interaction activates BAX-induced apoptosis. Post-translationally, ubiquitinated in the absence of XRCC6/Ku70. Ubiquitination promotes protein degradation. Ubiquitinated on Lys-128 and Lys-190. 'Lys-63'-linked polyubiquitin chains on Lys-128 are removed by USP12. Expressed in a wide variety of tissues. Isoform Psi is found in glial tumors. Isoform Alpha is expressed in spleen, breast, ovary, testis, colon and brain, and at low levels in skin and lung. Isoform Sigma is expressed in spleen, breast, ovary, testis, lung, colon, brain and at low levels in skin. Isoform Alpha and isoform Sigma are expressed in pro-myelocytic leukemia, histiocytic lymphoma, Burkitt's lymphoma, T-cell lymphoma, lymphoblastic leukemia, breast adenocarcinoma, ovary adenocarcinoma, prostate carcinoma, prostate adenocarcinoma, lung carcinoma, epidermoid carcinoma, small cell lung carcinoma and colon adenocarcinoma cell lines.

Its subcellular location is the mitochondrion outer membrane. It localises to the cytoplasm. The protein resides in the nucleus. Functionally, plays a role in the mitochondrial apoptotic process. Under normal conditions, BAX is largely cytosolic via constant retrotranslocation from mitochondria to the cytosol mediated by BCL2L1/Bcl-xL, which avoids accumulation of toxic BAX levels at the mitochondrial outer membrane (MOM). Under stress conditions, undergoes a conformation change that causes translocation to the mitochondrion membrane, leading to the release of cytochrome c that then triggers apoptosis. Promotes activation of CASP3, and thereby apoptosis. In Homo sapiens (Human), this protein is Apoptosis regulator BAX (BAX).